Here is a 177-residue protein sequence, read N- to C-terminus: ATP-dependent protease subunit HslV (177 aa).

Residue threonine 2 is part of the active site. Positions 158, 161, and 164 each coordinate Na(+).

The protein belongs to the peptidase T1B family. HslV subfamily. As to quaternary structure, a double ring-shaped homohexamer of HslV is capped on each side by a ring-shaped HslU homohexamer. The assembly of the HslU/HslV complex is dependent on binding of ATP.

It is found in the cytoplasm. The enzyme catalyses ATP-dependent cleavage of peptide bonds with broad specificity.. Allosterically activated by HslU binding. Protease subunit of a proteasome-like degradation complex believed to be a general protein degrading machinery. The protein is ATP-dependent protease subunit HslV of Pseudomonas aeruginosa (strain LESB58).